Consider the following 243-residue polypeptide: GTP cyclohydrolase 1 (243 aa).

Position 15 is a phosphothreonine (Thr15). The tract at residues 18–55 (NIRPTSPYTLNPPVERDGFSWPSVGTRQRAEETEEEEK) is disordered. Ser23 carries the phosphoserine modification. The Zn(2+) site is built by Cys132, His135, and Cys203.

This sequence belongs to the GTP cyclohydrolase I family. In terms of assembly, homodimer.

It carries out the reaction GTP + H2O = 7,8-dihydroneopterin 3'-triphosphate + formate + H(+). Its pathway is cofactor biosynthesis; 7,8-dihydroneopterin triphosphate biosynthesis; 7,8-dihydroneopterin triphosphate from GTP: step 1/1. GTP cyclohydrolase 1 is the first enzyme in the biosynthetic pathway leading to folic acid. The polypeptide is GTP cyclohydrolase 1 (Saccharomyces cerevisiae (strain ATCC 204508 / S288c) (Baker's yeast)).